We begin with the raw amino-acid sequence, 205 residues long: High frequency lysogenization protein HflD homolog (205 aa).

It belongs to the HflD family.

It is found in the cytoplasm. Its subcellular location is the cell inner membrane. The chain is High frequency lysogenization protein HflD homolog from Shewanella halifaxensis (strain HAW-EB4).